A 266-amino-acid polypeptide reads, in one-letter code: Phosphatidylserine decarboxylase proenzyme (266 aa).

Catalysis depends on charge relay system; for autoendoproteolytic cleavage activity residues aspartate 74, histidine 135, and serine 237. The active-site Schiff-base intermediate with substrate; via pyruvic acid; for decarboxylase activity is the serine 237. Serine 237 is modified (pyruvic acid (Ser); by autocatalysis).

Belongs to the phosphatidylserine decarboxylase family. PSD-B subfamily. Prokaryotic type I sub-subfamily. Heterodimer of a large membrane-associated beta subunit and a small pyruvoyl-containing alpha subunit. Pyruvate is required as a cofactor. Is synthesized initially as an inactive proenzyme. Formation of the active enzyme involves a self-maturation process in which the active site pyruvoyl group is generated from an internal serine residue via an autocatalytic post-translational modification. Two non-identical subunits are generated from the proenzyme in this reaction, and the pyruvate is formed at the N-terminus of the alpha chain, which is derived from the carboxyl end of the proenzyme. The autoendoproteolytic cleavage occurs by a canonical serine protease mechanism, in which the side chain hydroxyl group of the serine supplies its oxygen atom to form the C-terminus of the beta chain, while the remainder of the serine residue undergoes an oxidative deamination to produce ammonia and the pyruvoyl prosthetic group on the alpha chain. During this reaction, the Ser that is part of the protease active site of the proenzyme becomes the pyruvoyl prosthetic group, which constitutes an essential element of the active site of the mature decarboxylase.

The protein localises to the cell membrane. It carries out the reaction a 1,2-diacyl-sn-glycero-3-phospho-L-serine + H(+) = a 1,2-diacyl-sn-glycero-3-phosphoethanolamine + CO2. The protein operates within phospholipid metabolism; phosphatidylethanolamine biosynthesis; phosphatidylethanolamine from CDP-diacylglycerol: step 2/2. In terms of biological role, catalyzes the formation of phosphatidylethanolamine (PtdEtn) from phosphatidylserine (PtdSer). This is Phosphatidylserine decarboxylase proenzyme from Campylobacter jejuni subsp. jejuni serotype O:2 (strain ATCC 700819 / NCTC 11168).